We begin with the raw amino-acid sequence, 891 residues long: uncharacterized protein (891 aa).

An N-terminal signal peptide occupies residues 1–20 (MKILKSLVLLVLFMAMPAKA). A run of 6 helical transmembrane segments spans residues 525 to 545 (VTIF…VEVI), 568 to 588 (TYFF…VVGA), 614 to 634 (LLFI…IITI), 652 to 672 (VIAF…IILM), 685 to 705 (ISTL…FLLI), and 776 to 796 (FLVL…SYSL).

The protein belongs to the TrbL/VirB6 family.

The protein resides in the cell membrane. This is an uncharacterized protein from Rickettsia conorii (strain ATCC VR-613 / Malish 7).